A 148-amino-acid polypeptide reads, in one-letter code: MKINDLKPAPGSKKKAKRIGRGLGSGHGRYATKGLKGQKSRSGGAKGAGFEGGQMPLQRRVPKRGFSNAPFKKEYAIVNLEDLNKIIDEVDIITPETLLQKGIVKDLKDGLKILGNGEIKKSITVKTNAISKSALQKIQSVGGKVEVI.

A disordered region spans residues 1–61 (MKINDLKPAP…GGQMPLQRRV (61 aa)).

This sequence belongs to the universal ribosomal protein uL15 family. Part of the 50S ribosomal subunit.

Binds to the 23S rRNA. The sequence is that of Large ribosomal subunit protein uL15 from Thermodesulfovibrio yellowstonii (strain ATCC 51303 / DSM 11347 / YP87).